The primary structure comprises 25 residues: Caerin-1.3 (25 aa).

Leucine amide is present on Leu-25.

In terms of tissue distribution, expressed by the skin parotoid and/or rostral glands.

It localises to the secreted. Antibacterial peptide, that adopts an alpha helical conformation which can disrupt bacterial membranes. Each caerin displays a different antimicrobial specificity. This Ranoidea caerulea (Green tree frog) protein is Caerin-1.3.